Reading from the N-terminus, the 499-residue chain is Phenylalanine--tRNA ligase alpha subunit (499 aa).

L-phenylalanine is bound by residues Thr333, Gln372 to Glu374, and Tyr412. Glu414 provides a ligand contact to Mg(2+). Phe436 provides a ligand contact to L-phenylalanine.

This sequence belongs to the class-II aminoacyl-tRNA synthetase family. Phe-tRNA synthetase alpha subunit type 2 subfamily. As to quaternary structure, tetramer of two alpha and two beta subunits. Requires Mg(2+) as cofactor.

The protein resides in the cytoplasm. The enzyme catalyses tRNA(Phe) + L-phenylalanine + ATP = L-phenylalanyl-tRNA(Phe) + AMP + diphosphate + H(+). The sequence is that of Phenylalanine--tRNA ligase alpha subunit from Thermoplasma acidophilum (strain ATCC 25905 / DSM 1728 / JCM 9062 / NBRC 15155 / AMRC-C165).